The sequence spans 1029 residues: E3 ubiquitin-protein ligase UPL6 (1029 aa).

Residues 1-20 (MFFSGDPSTRKRVDLGGRST) form a disordered region. The span at 8 to 20 (STRKRVDLGGRST) shows a compositional bias: basic and acidic residues. The region spanning 45-74 (QNSAALKIQKFFRGRRSMAIERSKVRHDFC) is the IQ domain. Residues 688 to 1029 (SEDDLRSSIR…ISAEAGFDLS (342 aa)) enclose the HECT domain. The active-site Glycyl thioester intermediate is Cys-997.

Belongs to the UPL family.

The catalysed reaction is S-ubiquitinyl-[E2 ubiquitin-conjugating enzyme]-L-cysteine + [acceptor protein]-L-lysine = [E2 ubiquitin-conjugating enzyme]-L-cysteine + N(6)-ubiquitinyl-[acceptor protein]-L-lysine.. The protein operates within protein modification; protein ubiquitination. Its function is as follows. Probable E3 ubiquitin-protein ligase which mediates ubiquitination and subsequent proteasomal degradation of target proteins. The protein is E3 ubiquitin-protein ligase UPL6 (UPL6) of Arabidopsis thaliana (Mouse-ear cress).